A 394-amino-acid chain; its full sequence is 8-amino-7-oxononanoate synthase (394 aa).

Arg-21 contacts substrate. Pyridoxal 5'-phosphate is bound at residue 112–113 (GY). Residue His-137 participates in substrate binding. Pyridoxal 5'-phosphate contacts are provided by Ser-183, His-211, and Thr-239. Lys-242 carries the N6-(pyridoxal phosphate)lysine modification. Thr-358 serves as a coordination point for substrate.

Belongs to the class-II pyridoxal-phosphate-dependent aminotransferase family. BioF subfamily. Homodimer. Pyridoxal 5'-phosphate is required as a cofactor.

The enzyme catalyses 6-carboxyhexanoyl-[ACP] + L-alanine + H(+) = (8S)-8-amino-7-oxononanoate + holo-[ACP] + CO2. It participates in cofactor biosynthesis; biotin biosynthesis. In terms of biological role, catalyzes the decarboxylative condensation of pimeloyl-[acyl-carrier protein] and L-alanine to produce 8-amino-7-oxononanoate (AON), [acyl-carrier protein], and carbon dioxide. The polypeptide is 8-amino-7-oxononanoate synthase (Paraburkholderia phymatum (strain DSM 17167 / CIP 108236 / LMG 21445 / STM815) (Burkholderia phymatum)).